The primary structure comprises 638 residues: 2-isopropylmalate synthase (638 aa).

One can recognise a Pyruvate carboxyltransferase domain in the interval 72-346; the sequence is PRWCSVDLRD…DPQLDLSNVP (275 aa). Residues aspartate 81, histidine 285, histidine 287, and asparagine 321 each coordinate Mg(2+). The regulatory domain stretch occupies residues 488 to 638; it reads VEQSGMTAAG…SAINRSQRQR (151 aa).

It belongs to the alpha-IPM synthase/homocitrate synthase family. LeuA type 2 subfamily. In terms of assembly, homodimer. The cofactor is Mg(2+).

The protein localises to the cytoplasm. The catalysed reaction is 3-methyl-2-oxobutanoate + acetyl-CoA + H2O = (2S)-2-isopropylmalate + CoA + H(+). The protein operates within amino-acid biosynthesis; L-leucine biosynthesis; L-leucine from 3-methyl-2-oxobutanoate: step 1/4. Catalyzes the condensation of the acetyl group of acetyl-CoA with 3-methyl-2-oxobutanoate (2-ketoisovalerate) to form 3-carboxy-3-hydroxy-4-methylpentanoate (2-isopropylmalate). The sequence is that of 2-isopropylmalate synthase from Bifidobacterium longum subsp. infantis (strain ATCC 15697 / DSM 20088 / JCM 1222 / NCTC 11817 / S12).